A 126-amino-acid polypeptide reads, in one-letter code: MRSSLLLGLTVVVLLGVIVPPCMAGQALNKLMPKIVSAIIYMVGQPNAGVTFLGHQCLVESTRQPDGFYTAKMSCASWTHDNPIVGEGRSRVELEALKGSITNFVQTASNYKKFTIDEVEDWIASY.

A signal peptide spans 1 to 24 (MRSSLLLGLTVVVLLGVIVPPCMA).

Expressed in the ejaculatory ducts of mature males. Not detected in the ejaculatory ducts of immature males. Not detected in hepatopancreas, female reproductive tract, eyes, exoskeleton, subcuticular epithelia, heart, gills, stomach, muscle and hemocytes.

It is found in the secreted. Functionally, has antibacterial activity against the Gram-positive bacterium M.luteus with an IC(90) of 125ug/ml. Has weak antibacterial activity against the Gram-negative bacterium A.hydrophila. The protein is Scygonadin of Scylla serrata (Mud crab).